We begin with the raw amino-acid sequence, 414 residues long: Protein RecA (414 aa).

78 to 85 (GPESSGKT) contacts ATP. Positions 361-384 (QEKAVEALKKEEGSKEDALTGNKD) are enriched in basic and acidic residues. The segment at 361–414 (QEKAVEALKKEEGSKEDALTGNKDETDDSAQKNSAASKAKRAEVVGLPADDSLF) is disordered.

It belongs to the RecA family.

Its subcellular location is the cytoplasm. Its function is as follows. Can catalyze the hydrolysis of ATP in the presence of single-stranded DNA, the ATP-dependent uptake of single-stranded DNA by duplex DNA, and the ATP-dependent hybridization of homologous single-stranded DNAs. It interacts with LexA causing its activation and leading to its autocatalytic cleavage. The chain is Protein RecA from Treponema denticola (strain ATCC 35405 / DSM 14222 / CIP 103919 / JCM 8153 / KCTC 15104).